We begin with the raw amino-acid sequence, 576 residues long: POU domain, class 6, transcription factor 1 (576 aa).

The tract at residues Pro65 to Glu88 is disordered. The POU-specific domain occupies Glu414–Glu488. The segment at residues Lys509 to Ser568 is a DNA-binding region (homeobox).

It belongs to the POU transcription factor family. Class-6 subfamily. In terms of tissue distribution, isoform C1 and isoform C2 are found in the brain, while isoform C7 is found in the testis.

It is found in the nucleus. Functionally, transcription factor that binds preferentially to a variant of the octamer motif (5'-ATGATAAT-3'). The protein is POU domain, class 6, transcription factor 1 (Pou6f1) of Mus musculus (Mouse).